Reading from the N-terminus, the 251-residue chain is Flap endonuclease Xni (251 aa).

Aspartate 104 is a Mg(2+) binding site. In terms of domain architecture, 5'-3' exonuclease spans 160-249 (VQPQQLPDYW…IDGNLQQLRL (90 aa)). 5 residues coordinate K(+): leucine 171, alanine 172, proline 180, valine 182, and isoleucine 185. The interaction with DNA stretch occupies residues 184–189 (GIGPKS).

Belongs to the Xni family. The cofactor is Mg(2+). K(+) serves as cofactor.

In terms of biological role, has flap endonuclease activity. During DNA replication, flap endonucleases cleave the 5'-overhanging flap structure that is generated by displacement synthesis when DNA polymerase encounters the 5'-end of a downstream Okazaki fragment. The polypeptide is Flap endonuclease Xni (Escherichia coli O17:K52:H18 (strain UMN026 / ExPEC)).